A 397-amino-acid chain; its full sequence is Phosphoglycerate kinase (397 aa).

Residues aspartate 22–asparagine 24, arginine 37, histidine 60–arginine 63, arginine 119, and arginine 152 each bind substrate. ATP contacts are provided by residues lysine 202, glutamate 324, and glycine 354 to threonine 357.

This sequence belongs to the phosphoglycerate kinase family. Monomer.

It localises to the cytoplasm. The enzyme catalyses (2R)-3-phosphoglycerate + ATP = (2R)-3-phospho-glyceroyl phosphate + ADP. It functions in the pathway carbohydrate degradation; glycolysis; pyruvate from D-glyceraldehyde 3-phosphate: step 2/5. The protein is Phosphoglycerate kinase (pgk) of Zymomonas mobilis subsp. mobilis (strain ATCC 31821 / ZM4 / CP4).